Here is a 132-residue protein sequence, read N- to C-terminus: Replication enhancer protein (132 aa).

This sequence belongs to the geminiviridae replication enhancer protein family. Homooligomer. Interacts with the replication-associated protein (REP). Interacts with host proliferating cell nuclear antigen (PCNA). Interacts with host retinoblastoma-related protein 1 (RBR1), and may thereby deregulate the host cell cycle. Oligomerization and interaction with PCNA are necessary for optimal replication enhancement.

Functionally, increases viral DNA accumulation. Enhances infectivity and symptom expression. In Macroptilium lathyroides (Lima bean), this protein is Replication enhancer protein.